The sequence spans 186 residues: GTP-dependent dephospho-CoA kinase (186 aa).

GTP is bound by residues aspartate 43, isoleucine 44, valine 45, aspartate 62, glutamate 120, and aspartate 143.

This sequence belongs to the GTP-dependent DPCK family.

The catalysed reaction is 3'-dephospho-CoA + GTP = GDP + CoA + H(+). It functions in the pathway cofactor biosynthesis; coenzyme A biosynthesis. Its function is as follows. Catalyzes the GTP-dependent phosphorylation of the 3'-hydroxyl group of dephosphocoenzyme A to form coenzyme A (CoA). This Haloquadratum walsbyi (strain DSM 16790 / HBSQ001) protein is GTP-dependent dephospho-CoA kinase.